The chain runs to 161 residues: Large ribosomal subunit protein bL9 (161 aa).

This sequence belongs to the bacterial ribosomal protein bL9 family.

In terms of biological role, binds to the 23S rRNA. The protein is Large ribosomal subunit protein bL9 of Protochlamydia amoebophila (strain UWE25).